The sequence spans 62 residues: uncharacterized protein (62 aa).

Residues 26 to 62 (YELATLYEAMQKENEEQIEQSKNKLERLRKEWIRLNG) are a coiled coil.

This is an uncharacterized protein from Bacillus subtilis (strain 168).